The chain runs to 331 residues: Betaine-homocysteine S-methyltransferase (331 aa).

A Hcy-binding domain is found at 3–324; sequence VNQKWNWDTK…TDVLAIRKYV (322 aa). C243, C309, and C310 together coordinate Zn(2+).

Belongs to the Betaine-homocysteine S-methyltransferase, BHMT family. Zn(2+) serves as cofactor.

It carries out the reaction L-homocysteine + glycine betaine = N,N-dimethylglycine + L-methionine. The protein operates within amino-acid biosynthesis; L-methionine biosynthesis via de novo pathway. Functionally, involved in the regulation of homocysteine metabolism. Converts betaine and homocysteine to dimethylglycine and methionine, respectively. The chain is Betaine-homocysteine S-methyltransferase from Drosophila melanogaster (Fruit fly).